An 89-amino-acid chain; its full sequence is UPF0213 protein LMOf2365_0181 (89 aa).

Residues 5-80 (SEHFFYVLKC…KKLSRKNKDA (76 aa)) enclose the GIY-YIG domain.

Belongs to the UPF0213 family.

The sequence is that of UPF0213 protein LMOf2365_0181 from Listeria monocytogenes serotype 4b (strain F2365).